We begin with the raw amino-acid sequence, 289 residues long: MLKSVHQKVARRTGPLLAWLKLLWVRIDEDHMTTLAGNLAYVSLLSLVPFVAVIFALFAAFPMFSDVSVQLRHFVFANFMPATGDIIQRYIEQFVANSSKMTAVGALGLIVTSLLLMYAIDSALNTIWRSTRQRPKVYSFAVYWMILTLGPLLAGASLVISSYLLSLRWASGFNTMIDDVLRIFPLLLSWLSFWLLYSVVPTTRVPARDALIGSLVAALLFELGKKGFALYITMFPSYQLIYGVLAVIPILFLWVYWTWCIVLLGAEITVTLGDYRKLRQAAREEAESV.

6 helical membrane-spanning segments follow: residues 44-64 (LLSL…FPMF), 104-124 (VGAL…DSAL), 140-160 (FAVY…SLVI), 183-203 (IFPL…VPTT), 215-235 (LVAA…ITMF), and 244-264 (VLAV…IVLL).

This sequence belongs to the UPF0761 family.

The protein resides in the cell inner membrane. This chain is UPF0761 membrane protein ESA_04062, found in Cronobacter sakazakii (strain ATCC BAA-894) (Enterobacter sakazakii).